Reading from the N-terminus, the 144-residue chain is VIIGDIMELHHKKHHATYTNNLNAAEEKLAAAHAEGDIGGMIALQPALKFNGGGFINHCIFWTNLSPQGGGVPEGDLADAINRDFGSFDSFKTTLTAATVAIQGSGWGWLGFDPKTHHLKIATCVNQDPLQATTGMVPLFGIDV.

Residues H10, H58, and D143 each coordinate Mn(2+).

It belongs to the iron/manganese superoxide dismutase family. In terms of assembly, homotetramer. The cofactor is Mn(2+).

Its subcellular location is the mitochondrion matrix. The enzyme catalyses 2 superoxide + 2 H(+) = H2O2 + O2. Destroys superoxide anion radicals which are normally produced within the cells and which are toxic to biological systems. The chain is Superoxide dismutase [Mn], mitochondrial from Apostichopus californicus (California sea cucumber).